The primary structure comprises 123 residues: Small ribosomal subunit protein uS13 (123 aa).

The tract at residues 99–123 (RGQRTRTNARTRKGPRRTVGVKRKK) is disordered.

It belongs to the universal ribosomal protein uS13 family. In terms of assembly, part of the 30S ribosomal subunit. Forms a loose heterodimer with protein S19. Forms two bridges to the 50S subunit in the 70S ribosome.

Located at the top of the head of the 30S subunit, it contacts several helices of the 16S rRNA. In the 70S ribosome it contacts the 23S rRNA (bridge B1a) and protein L5 of the 50S subunit (bridge B1b), connecting the 2 subunits; these bridges are implicated in subunit movement. Contacts the tRNAs in the A and P-sites. The polypeptide is Small ribosomal subunit protein uS13 (Carboxydothermus hydrogenoformans (strain ATCC BAA-161 / DSM 6008 / Z-2901)).